The chain runs to 441 residues: Tol-Pal system protein TolB (441 aa).

An N-terminal signal peptide occupies residues methionine 1–alanine 39.

Belongs to the TolB family. In terms of assembly, the Tol-Pal system is composed of five core proteins: the inner membrane proteins TolA, TolQ and TolR, the periplasmic protein TolB and the outer membrane protein Pal. They form a network linking the inner and outer membranes and the peptidoglycan layer.

Its subcellular location is the periplasm. Its function is as follows. Part of the Tol-Pal system, which plays a role in outer membrane invagination during cell division and is important for maintaining outer membrane integrity. The chain is Tol-Pal system protein TolB from Bordetella bronchiseptica (strain ATCC BAA-588 / NCTC 13252 / RB50) (Alcaligenes bronchisepticus).